A 270-amino-acid polypeptide reads, in one-letter code: 3-methyl-2-oxobutanoate hydroxymethyltransferase (270 aa).

Mg(2+)-binding residues include D50 and D89. 3-methyl-2-oxobutanoate-binding positions include 50–51 (DS), D89, and K118. E120 is a Mg(2+) binding site. E187 acts as the Proton acceptor in catalysis.

It belongs to the PanB family. As to quaternary structure, homodecamer; pentamer of dimers. Mg(2+) serves as cofactor.

The protein localises to the cytoplasm. The enzyme catalyses 3-methyl-2-oxobutanoate + (6R)-5,10-methylene-5,6,7,8-tetrahydrofolate + H2O = 2-dehydropantoate + (6S)-5,6,7,8-tetrahydrofolate. Its pathway is cofactor biosynthesis; (R)-pantothenate biosynthesis; (R)-pantoate from 3-methyl-2-oxobutanoate: step 1/2. In terms of biological role, catalyzes the reversible reaction in which hydroxymethyl group from 5,10-methylenetetrahydrofolate is transferred onto alpha-ketoisovalerate to form ketopantoate. This Helicobacter pylori (strain ATCC 700392 / 26695) (Campylobacter pylori) protein is 3-methyl-2-oxobutanoate hydroxymethyltransferase.